Consider the following 244-residue polypeptide: Ribonuclease PH (244 aa).

Residues R90 and 128–130 (GTR) each bind phosphate.

This sequence belongs to the RNase PH family. As to quaternary structure, homohexameric ring arranged as a trimer of dimers.

It carries out the reaction tRNA(n+1) + phosphate = tRNA(n) + a ribonucleoside 5'-diphosphate. Its function is as follows. Phosphorolytic 3'-5' exoribonuclease that plays an important role in tRNA 3'-end maturation. Removes nucleotide residues following the 3'-CCA terminus of tRNAs; can also add nucleotides to the ends of RNA molecules by using nucleoside diphosphates as substrates, but this may not be physiologically important. Probably plays a role in initiation of 16S rRNA degradation (leading to ribosome degradation) during starvation. The chain is Ribonuclease PH from Cutibacterium acnes (strain DSM 16379 / KPA171202) (Propionibacterium acnes).